Consider the following 541-residue polypeptide: uncharacterized protein (541 aa).

It is found in the virion. This is an uncharacterized protein from Acanthamoeba polyphaga mimivirus (APMV).